The chain runs to 164 residues: Phosphopantetheine adenylyltransferase (164 aa).

Position 10 (T10) interacts with substrate. ATP contacts are provided by residues 10-11 and H18; that span reads TF. K42, L74, and R88 together coordinate substrate. ATP-binding positions include 89-91, E99, and 124-130; these read GIR and NSFISST.

The protein belongs to the bacterial CoaD family. In terms of assembly, homohexamer. Mg(2+) serves as cofactor.

It is found in the cytoplasm. It carries out the reaction (R)-4'-phosphopantetheine + ATP + H(+) = 3'-dephospho-CoA + diphosphate. It participates in cofactor biosynthesis; coenzyme A biosynthesis; CoA from (R)-pantothenate: step 4/5. In terms of biological role, reversibly transfers an adenylyl group from ATP to 4'-phosphopantetheine, yielding dephospho-CoA (dPCoA) and pyrophosphate. The chain is Phosphopantetheine adenylyltransferase from Pseudoalteromonas translucida (strain TAC 125).